A 326-amino-acid chain; its full sequence is Putative HTH-type transcriptional regulatory protein MmarC5_0898 (326 aa).

The region spanning 128–183 (LRETREKLKISVGELAEISRVSRKTIYKYEQNEANPSAEVAIKIEEYLDVPLIKGI) is the HTH cro/C1-type domain. Residues 139–158 (VGELAEISRVSRKTIYKYEQ) constitute a DNA-binding region (H-T-H motif).

This Methanococcus maripaludis (strain C5 / ATCC BAA-1333) protein is Putative HTH-type transcriptional regulatory protein MmarC5_0898.